We begin with the raw amino-acid sequence, 221 residues long: Interleukin-12 subunit alpha (221 aa).

An N-terminal signal peptide occupies residues M1–G25. 3 disulfide bridges follow: C39/C112, C66/C198, and C87/C125. N95 is a glycosylation site (N-linked (GlcNAc...) asparagine).

It belongs to the IL-6 superfamily. Heterodimer with IL12B; disulfide-linked. This heterodimer is known as interleukin IL-12. Heterodimer with EBI3/IL27B; not disulfide-linked. This heterodimer is known as interleukin IL-35. Interacts with NBR1; this interaction promotes IL-12 secretion.

The protein localises to the secreted. Its function is as follows. Heterodimerizes with IL12B to form the IL-12 cytokine or with EBI3/IL27B to form the IL-35 cytokine. IL-12 is primarily produced by professional antigen-presenting cells (APCs) such as B-cells and dendritic cells (DCs) as well as macrophages and granulocytes and regulates T-cell and natural killer-cell responses, induces the production of interferon-gamma (IFN-gamma), favors the differentiation of T-helper 1 (Th1) cells and is an important link between innate resistance and adaptive immunity. Mechanistically, exerts its biological effects through a receptor composed of IL12R1 and IL12R2 subunits. Binding to the receptor results in the rapid tyrosine phosphorylation of a number of cellular substrates including the JAK family kinases TYK2 and JAK2. In turn, recruited STAT4 gets phosphorylated and translocates to the nucleus where it regulates cytokine/growth factor responsive genes. As part of IL-35, plays essential roles in maintaining the immune homeostasis of the liver microenvironment and also functions as an immune-suppressive cytokine. Mediates biological events through unconventional receptors composed of IL12RB2 and gp130/IL6ST heterodimers or homodimers. Signaling requires the transcription factors STAT1 and STAT4, which form a unique heterodimer that binds to distinct DNA sites. The polypeptide is Interleukin-12 subunit alpha (IL12A) (Bubalus carabanensis (Swamp type water buffalo)).